A 257-amino-acid polypeptide reads, in one-letter code: Trans-aconitate 2-methyltransferase (257 aa).

The protein belongs to the methyltransferase superfamily. Tam family.

The protein resides in the cytoplasm. It carries out the reaction trans-aconitate + S-adenosyl-L-methionine = (E)-3-(methoxycarbonyl)pent-2-enedioate + S-adenosyl-L-homocysteine. Its function is as follows. Catalyzes the S-adenosylmethionine monomethyl esterification of trans-aconitate. The protein is Trans-aconitate 2-methyltransferase of Rhizobium meliloti (strain 1021) (Ensifer meliloti).